The following is a 220-amino-acid chain: MKFEKYIDHTLLKPESTRTQIDQIIDEAKAYNFKSVCVNPTHVKYAAERLADSEVLVCTVIGFPLGASTTATKAFETEDAIQNGADEIDMVINIGALKDGRFDDVQQDIEAVVKVAKGHTVKVIIETVLLDHDEIVKASELTKAAGADFVKTSTGFAGGGATAEDVKLMKDTVGADVEVKASGGVRNLEDFNKMVEAGATRIGASAGVQIMQGLEADSDY.

The active-site Proton donor/acceptor is the aspartate 89. The Schiff-base intermediate with acetaldehyde role is filled by lysine 151. Residue lysine 180 is the Proton donor/acceptor of the active site.

The protein belongs to the DeoC/FbaB aldolase family. DeoC type 1 subfamily.

It localises to the cytoplasm. The catalysed reaction is 2-deoxy-D-ribose 5-phosphate = D-glyceraldehyde 3-phosphate + acetaldehyde. Its pathway is carbohydrate degradation; 2-deoxy-D-ribose 1-phosphate degradation; D-glyceraldehyde 3-phosphate and acetaldehyde from 2-deoxy-alpha-D-ribose 1-phosphate: step 2/2. In terms of biological role, catalyzes a reversible aldol reaction between acetaldehyde and D-glyceraldehyde 3-phosphate to generate 2-deoxy-D-ribose 5-phosphate. This is Deoxyribose-phosphate aldolase 1 from Staphylococcus aureus (strain MSSA476).